A 301-amino-acid chain; its full sequence is Mitochondrial substrate carrier family protein X (301 aa).

Topologically, residues 1-23 (MVQQQQQQQQIKKNQVKPPLYSN) are mitochondrial intermembrane. 3 Solcar repeats span residues 18 to 109 (PPLY…FRTR), 117 to 199 (IKLW…MKHN), and 208 to 296 (IGLP…QKSF). Residues 24-44 (LIAGAIAGVIGSSVVFPLDFV) traverse the membrane as a helical segment. Over 45 to 75 (KTRLQQQRVSIDGSKQYNGIIDCFKKVIKNE) the chain is Mitochondrial matrix. A helical transmembrane segment spans residues 76–97 (GGVRGLYRGLSSNLIGIIPEKA). Residues 98–122 (LKLAMNDYFRTRFQGDRSYIKLWEE) are Mitochondrial intermembrane-facing. A helical transmembrane segment spans residues 123–143 (VASGGLAGMCQVVATNPMELV). Residues 144-173 (KIRMQVSGLSGKKASLKEVVSELGIKGLYK) lie on the Mitochondrial matrix side of the membrane. The helical transmembrane segment at 174–194 (GTASTLLRDVPFSMIYFSIYG) threads the bilayer. Residues 195–207 (RMKHNLTDQETGE) are Mitochondrial intermembrane-facing. The helical transmembrane segment at 208–228 (IGLPKILLCGITAGSIAASVS) threads the bilayer. At 229–271 (TPFDVIKTRIQVKPGPNDPHYKGIADCFRKTIQSEGPKALFKG) the chain is on the mitochondrial matrix side. Residues 272 to 292 (VLPRVCIISPLFGITLVVYEI) form a helical membrane-spanning segment. At 293 to 301 (QKSFYASTH) the chain is on the mitochondrial intermembrane side.

Belongs to the mitochondrial carrier (TC 2.A.29) family.

It localises to the mitochondrion inner membrane. Its function is as follows. Mitochondrial solute carriers shuttle metabolites, nucleotides, and cofactors through the mitochondrial inner membrane. The polypeptide is Mitochondrial substrate carrier family protein X (mcfX) (Dictyostelium discoideum (Social amoeba)).